A 147-amino-acid polypeptide reads, in one-letter code: D-aminoacyl-tRNA deacylase (147 aa).

The Gly-cisPro motif, important for rejection of L-amino acids motif lies at 138-139; that stretch reads GP.

This sequence belongs to the DTD family. As to quaternary structure, homodimer.

The protein resides in the cytoplasm. It carries out the reaction glycyl-tRNA(Ala) + H2O = tRNA(Ala) + glycine + H(+). The enzyme catalyses a D-aminoacyl-tRNA + H2O = a tRNA + a D-alpha-amino acid + H(+). Functionally, an aminoacyl-tRNA editing enzyme that deacylates mischarged D-aminoacyl-tRNAs. Also deacylates mischarged glycyl-tRNA(Ala), protecting cells against glycine mischarging by AlaRS. Acts via tRNA-based rather than protein-based catalysis; rejects L-amino acids rather than detecting D-amino acids in the active site. By recycling D-aminoacyl-tRNA to D-amino acids and free tRNA molecules, this enzyme counteracts the toxicity associated with the formation of D-aminoacyl-tRNA entities in vivo and helps enforce protein L-homochirality. The sequence is that of D-aminoacyl-tRNA deacylase from Prosthecochloris aestuarii (strain DSM 271 / SK 413).